The primary structure comprises 420 residues: L-rhamnose isomerase (420 aa).

Mn(2+) is bound by residues histidine 262, aspartate 294, and aspartate 296.

Belongs to the rhamnose isomerase family. As to quaternary structure, homotetramer. Mn(2+) serves as cofactor.

It localises to the cytoplasm. It carries out the reaction L-rhamnopyranose = L-rhamnulose. Its pathway is carbohydrate degradation; L-rhamnose degradation; glycerone phosphate from L-rhamnose: step 1/3. Catalyzes the interconversion of L-rhamnose and L-rhamnulose. The protein is L-rhamnose isomerase of Pectobacterium carotovorum subsp. carotovorum (strain PC1).